Consider the following 147-residue polypeptide: Small ribosomal subunit protein uS12 (147 aa).

It belongs to the universal ribosomal protein uS12 family. Part of the 30S ribosomal subunit.

Functionally, with S4 and S5 plays an important role in translational accuracy. Located at the interface of the 30S and 50S subunits. The chain is Small ribosomal subunit protein uS12 from Methanococcus maripaludis (strain C5 / ATCC BAA-1333).